The chain runs to 443 residues: Tol-Pal system protein TolB (443 aa).

The N-terminal stretch at 1–33 (MKIGIINTKIRTVFSAFACMIAASLVCTMPARA) is a signal peptide.

It belongs to the TolB family. As to quaternary structure, the Tol-Pal system is composed of five core proteins: the inner membrane proteins TolA, TolQ and TolR, the periplasmic protein TolB and the outer membrane protein Pal. They form a network linking the inner and outer membranes and the peptidoglycan layer.

Its subcellular location is the periplasm. Functionally, part of the Tol-Pal system, which plays a role in outer membrane invagination during cell division and is important for maintaining outer membrane integrity. The protein is Tol-Pal system protein TolB of Brucella suis (strain ATCC 23445 / NCTC 10510).